A 336-amino-acid chain; its full sequence is Holliday junction branch migration complex subunit RuvB (336 aa).

A large ATPase domain (RuvB-L) region spans residues 4-185; sequence MDERLLSGES…FGVLSRLEYY (182 aa). ATP is bound by residues leucine 24, arginine 25, glycine 66, lysine 69, threonine 70, threonine 71, 132-134, arginine 175, tyrosine 185, and arginine 222; that span reads EDF. Threonine 70 lines the Mg(2+) pocket. A small ATPAse domain (RuvB-S) region spans residues 186-256; sequence TVDQLSAIVE…ITQMALELLQ (71 aa). The head domain (RuvB-H) stretch occupies residues 259 to 336; the sequence is KLGLDHIDHK…EHFGMEMPKV (78 aa). The DNA site is built by arginine 314 and arginine 319.

The protein belongs to the RuvB family. As to quaternary structure, homohexamer. Forms an RuvA(8)-RuvB(12)-Holliday junction (HJ) complex. HJ DNA is sandwiched between 2 RuvA tetramers; dsDNA enters through RuvA and exits via RuvB. An RuvB hexamer assembles on each DNA strand where it exits the tetramer. Each RuvB hexamer is contacted by two RuvA subunits (via domain III) on 2 adjacent RuvB subunits; this complex drives branch migration. In the full resolvosome a probable DNA-RuvA(4)-RuvB(12)-RuvC(2) complex forms which resolves the HJ.

The protein localises to the cytoplasm. The enzyme catalyses ATP + H2O = ADP + phosphate + H(+). Functionally, the RuvA-RuvB-RuvC complex processes Holliday junction (HJ) DNA during genetic recombination and DNA repair, while the RuvA-RuvB complex plays an important role in the rescue of blocked DNA replication forks via replication fork reversal (RFR). RuvA specifically binds to HJ cruciform DNA, conferring on it an open structure. The RuvB hexamer acts as an ATP-dependent pump, pulling dsDNA into and through the RuvAB complex. RuvB forms 2 homohexamers on either side of HJ DNA bound by 1 or 2 RuvA tetramers; 4 subunits per hexamer contact DNA at a time. Coordinated motions by a converter formed by DNA-disengaged RuvB subunits stimulates ATP hydrolysis and nucleotide exchange. Immobilization of the converter enables RuvB to convert the ATP-contained energy into a lever motion, pulling 2 nucleotides of DNA out of the RuvA tetramer per ATP hydrolyzed, thus driving DNA branch migration. The RuvB motors rotate together with the DNA substrate, which together with the progressing nucleotide cycle form the mechanistic basis for DNA recombination by continuous HJ branch migration. Branch migration allows RuvC to scan DNA until it finds its consensus sequence, where it cleaves and resolves cruciform DNA. The sequence is that of Holliday junction branch migration complex subunit RuvB from Bacillus cereus (strain ZK / E33L).